The primary structure comprises 1042 residues: Putative type I restriction enzyme MjaIXP endonuclease subunit (1042 aa).

Residues 323 to 487 (GETPEDRRIG…FLVFGDYISA (165 aa)) form the Helicase ATP-binding domain. Residues 439–442 (DEAH) carry the DEAH box motif. The Helicase C-terminal domain maps to 551–731 (LTEDYLSKVS…DIKVVIEEMK (181 aa)).

The protein belongs to the HsdR family. In terms of assembly, the type I restriction/modification system is composed of three polypeptides R, M and S.

The catalysed reaction is Endonucleolytic cleavage of DNA to give random double-stranded fragments with terminal 5'-phosphates, ATP is simultaneously hydrolyzed.. In terms of biological role, the restriction (R) subunit of a type I restriction enzyme that recognizes 5'-CCAN(5)GTR-3' and cleaves a random distance away. The R subunit is required for both nuclease and ATPase activities, but not for modification. After locating a non-methylated recognition site, the enzyme complex serves as a molecular motor that translocates DNA in an ATP-dependent manner until a collision occurs that triggers cleavage. The sequence is that of Putative type I restriction enzyme MjaIXP endonuclease subunit from Methanocaldococcus jannaschii (strain ATCC 43067 / DSM 2661 / JAL-1 / JCM 10045 / NBRC 100440) (Methanococcus jannaschii).